The following is a 242-amino-acid chain: Segregation and condensation protein A (242 aa).

This sequence belongs to the ScpA family. In terms of assembly, component of a cohesin-like complex composed of ScpA, ScpB and the Smc homodimer, in which ScpA and ScpB bind to the head domain of Smc. The presence of the three proteins is required for the association of the complex with DNA.

The protein localises to the cytoplasm. Participates in chromosomal partition during cell division. May act via the formation of a condensin-like complex containing Smc and ScpB that pull DNA away from mid-cell into both cell halves. The protein is Segregation and condensation protein A of Lactococcus lactis subsp. cremoris (strain MG1363).